Consider the following 53-residue polypeptide: Sec-independent protein translocase protein TatA (53 aa).

Residues 1–21 (MGMSVSHLLIVLLIIFVLFGA) form a helical membrane-spanning segment.

The protein belongs to the TatA/E family. As to quaternary structure, the Tat system comprises two distinct complexes: a TatABC complex, containing multiple copies of TatA, TatB and TatC subunits, and a separate TatA complex, containing only TatA subunits. Substrates initially bind to the TatABC complex, which probably triggers association of the separate TatA complex to form the active translocon.

Its subcellular location is the cell inner membrane. Its function is as follows. Part of the twin-arginine translocation (Tat) system that transports large folded proteins containing a characteristic twin-arginine motif in their signal peptide across membranes. TatA could form the protein-conducting channel of the Tat system. The polypeptide is Sec-independent protein translocase protein TatA (Rickettsia massiliae (strain Mtu5)).